The following is a 715-amino-acid chain: DNA ligase (715 aa).

NAD(+)-binding positions include 47–51 (DADYD), 96–97 (SL), and E128. Residue K130 is the N6-AMP-lysine intermediate of the active site. NAD(+) contacts are provided by R151, E188, K306, and K330. Zn(2+)-binding residues include C435, C438, C453, and C459. In terms of domain architecture, BRCT spans 637–715 (RRDTAVAGKT…EDEWLALIGN (79 aa)).

This sequence belongs to the NAD-dependent DNA ligase family. LigA subfamily. Mg(2+) serves as cofactor. Requires Mn(2+) as cofactor.

It catalyses the reaction NAD(+) + (deoxyribonucleotide)n-3'-hydroxyl + 5'-phospho-(deoxyribonucleotide)m = (deoxyribonucleotide)n+m + AMP + beta-nicotinamide D-nucleotide.. Its function is as follows. DNA ligase that catalyzes the formation of phosphodiester linkages between 5'-phosphoryl and 3'-hydroxyl groups in double-stranded DNA using NAD as a coenzyme and as the energy source for the reaction. It is essential for DNA replication and repair of damaged DNA. The sequence is that of DNA ligase from Rhodopseudomonas palustris (strain ATCC BAA-98 / CGA009).